Consider the following 392-residue polypeptide: 5-azacytidine-induced protein 2 (392 aa).

The tract at residues 1–197 (MDALVEDDIC…IELQKAKQTD (197 aa)) is homodimerization. Coiled-coil stretches lie at residues 40–76 (ALVT…LIAR), 102–135 (DRDN…EVEL), and 166–196 (DLKI…AKQT). Residues 216–257 (SDNMQHAYWELKREMSNLHLVTQVQAELLRKLKTSTAIKKAC) form an interaction with TBK1 and IKBKE region. Phosphoserine is present on residues S318 and S353. The interval 345–365 (EDNSWVFPSPPKSSETAFGET) is disordered.

Homodimer. Interacts with IKBKE, TBK1 and TICAM1. Interacts with TAX1BP1. Interacts with CALCOCO2. In terms of processing, ubiquitinated via 'Lys-48'-linked polyubiquitination by TRIM38, leading to its degradation.

It localises to the cytoplasm. Functionally, adapter protein which binds TBK1 and IKBKE playing a role in antiviral innate immunity. Activates serine/threonine-protein kinase TBK1 and facilitates its oligomerization. Enhances the phosphorylation of NF-kappa-B p65 subunit RELA by TBK1. Promotes TBK1-induced as well as TNF-alpha or PMA-induced activation of NF-kappa-B. Participates in IFNB promoter activation via TICAM1. In Pongo abelii (Sumatran orangutan), this protein is 5-azacytidine-induced protein 2 (AZI2).